A 190-amino-acid polypeptide reads, in one-letter code: MRNYNNFNRVWKAPRRPFEKERLDREMKLCGQYGLRCKREIWRVNMTLSKMRRTARLLLTLPENHPRRLLEGSAIMRRCHGYGFLDEDKDKLDYVLSLTVPDILERRLQTVVFKHGLAKSVHHSRVLIQQRHIAVAKQIVTIPSFIVRVSSEHHIAFADASPFGNGRPGRVKRVKRNAAKKGSGGGDDDE.

Residues 106–178 (RRLQTVVFKH…GRVKRVKRNA (73 aa)) enclose the S4 RNA-binding domain. Residues 166-190 (GRPGRVKRVKRNAAKKGSGGGDDDE) form a disordered region. Basic residues predominate over residues 169–179 (GRVKRVKRNAA).

This sequence belongs to the universal ribosomal protein uS4 family.

This Trypanosoma brucei brucei protein is Small ribosomal subunit protein uS4.